The primary structure comprises 268 residues: MQSSRSVSTEAFVRLVVDIGNTTTTLAVFTGETEPSVESVQSTLFGEPKAVAELFLSLAHRHGTPQAVAVCSVVPAAAASCSAQLESLFSVPVVTIAASLRLPFQLDYATPHTFGADRIALCAWSRHLFGDCPVIAVDIGTAITFDVLDAEGNYRGGLIMPGIDMMAGALNSRTAQLPLVDIDKPESLLGRSTIECIRNGIFWGAVRQIAGLIDAIGAELPGESKAAPAEVLVTGGNSRIIAPEIASITHLDELAVLRGIDLLLRLNS.

18-25 (DIGNTTTT) serves as a coordination point for ATP. Substrate contacts are provided by residues tyrosine 108 and 115–118 (GADR). Aspartate 117 functions as the Proton acceptor in the catalytic mechanism. A K(+)-binding site is contributed by aspartate 138. Threonine 141 is an ATP binding site. Threonine 193 contacts substrate.

Belongs to the type III pantothenate kinase family. Homodimer. It depends on NH4(+) as a cofactor. The cofactor is K(+).

Its subcellular location is the cytoplasm. The catalysed reaction is (R)-pantothenate + ATP = (R)-4'-phosphopantothenate + ADP + H(+). The protein operates within cofactor biosynthesis; coenzyme A biosynthesis; CoA from (R)-pantothenate: step 1/5. Catalyzes the phosphorylation of pantothenate (Pan), the first step in CoA biosynthesis. The protein is Type III pantothenate kinase of Chlorobaculum parvum (strain DSM 263 / NCIMB 8327) (Chlorobium vibrioforme subsp. thiosulfatophilum).